We begin with the raw amino-acid sequence, 107 residues long: Integration host factor subunit beta (107 aa).

A disordered region spans residues 56–107; it reads RPARVGRNPKSGEKVQVPEKFVPHFKPGKELRERVDGRAGEPLKADDPDDER. The segment covering 82-101 has biased composition (basic and acidic residues); that stretch reads PGKELRERVDGRAGEPLKAD.

The protein belongs to the bacterial histone-like protein family. As to quaternary structure, heterodimer of an alpha and a beta chain.

This protein is one of the two subunits of integration host factor, a specific DNA-binding protein that functions in genetic recombination as well as in transcriptional and translational control. In Burkholderia vietnamiensis (strain G4 / LMG 22486) (Burkholderia cepacia (strain R1808)), this protein is Integration host factor subunit beta.